Here is a 372-residue protein sequence, read N- to C-terminus: Cytochrome b (372 aa).

Helical transmembrane passes span 25 to 45, 69 to 90, 105 to 125, and 170 to 190; these read FGSM…FLAI, WMMQ…YIHI, WLSG…GYVL, and FFAL…IHIM. Residues histidine 75 and histidine 89 each contribute to the heme b site. Histidine 174 and histidine 188 together coordinate heme b. A ubiquinone is bound at residue histidine 193. 4 consecutive transmembrane segments (helical) span residues 218-238, 280-300, 312-332, and 339-358; these read HKDM…MSFM, LGGT…PFTH, LMQF…WAAT, and FTTI…IMNP.

Belongs to the cytochrome b family. In terms of assembly, the cytochrome bc1 complex contains 3 respiratory subunits (MT-CYB, CYC1 and UQCRFS1), 2 core proteins (UQCRC1 and UQCRC2) and probably 6 low-molecular weight proteins. Heme b is required as a cofactor.

It localises to the mitochondrion inner membrane. In terms of biological role, component of the ubiquinol-cytochrome c reductase complex (complex III or cytochrome b-c1 complex) that is part of the mitochondrial respiratory chain. The b-c1 complex mediates electron transfer from ubiquinol to cytochrome c. Contributes to the generation of a proton gradient across the mitochondrial membrane that is then used for ATP synthesis. This is Cytochrome b (MT-CYB) from Pantherophis obsoletus (Black ratsnake).